A 116-amino-acid chain; its full sequence is NADH-ubiquinone oxidoreductase chain 3 (116 aa).

Transmembrane regions (helical) follow at residues 3-23 (LITT…TISF), 56-76 (FFLI…LLPL), and 85-105 (PALT…GLIY).

Belongs to the complex I subunit 3 family.

The protein localises to the mitochondrion membrane. The enzyme catalyses a ubiquinone + NADH + 5 H(+)(in) = a ubiquinol + NAD(+) + 4 H(+)(out). Core subunit of the mitochondrial membrane respiratory chain NADH dehydrogenase (Complex I) that is believed to belong to the minimal assembly required for catalysis. Complex I functions in the transfer of electrons from NADH to the respiratory chain. The immediate electron acceptor for the enzyme is believed to be ubiquinone. The polypeptide is NADH-ubiquinone oxidoreductase chain 3 (MT-ND3) (Oncorhynchus masou (Cherry salmon)).